We begin with the raw amino-acid sequence, 321 residues long: GDP-L-fucose synthase (321 aa).

NADP(+)-binding positions include Gly10–Gly16, Arg36–Leu41, and Leu105–Ser108. Catalysis depends on Tyr136, which acts as the Proton donor/acceptor. Residues Lys140, Pro163–Leu166, and His179 each bind NADP(+). Arg187, Trp202, Arg209, and Asp278 together coordinate substrate.

The protein belongs to the NAD(P)-dependent epimerase/dehydratase family. Fucose synthase subfamily. As to quaternary structure, homodimer.

It localises to the cytoplasm. The catalysed reaction is GDP-beta-L-fucose + NADP(+) = GDP-4-dehydro-alpha-D-rhamnose + NADPH + H(+). The protein operates within nucleotide-sugar biosynthesis; GDP-L-fucose biosynthesis via de novo pathway; GDP-L-fucose from GDP-alpha-D-mannose: step 2/2. It functions in the pathway exopolysaccharide biosynthesis; colanic acid biosynthesis. Its activity is regulated as follows. Subject to product inhibition by NADP and GDP-fucose. Its function is as follows. Catalyzes the two-step NADP-dependent conversion of GDP-4-dehydro-6-deoxy-D-mannose to GDP-fucose, involving an epimerase and a reductase reaction. In Escherichia coli (strain K12), this protein is GDP-L-fucose synthase.